The following is a 238-amino-acid chain: Ion-translocating oxidoreductase complex subunit E (238 aa).

6 consecutive transmembrane segments (helical) span residues 24-44 (ALWQYNVALVQMLALCPTLAV), 52-72 (LGMGLATTLVLVMTNALISSM), 84-104 (VMIGVIAGVVTLTDMAMNAWM), 106-126 (ELYKVLGLFIALIVTNCAVLG), 141-161 (ILDGAGMGAGFTAVLVVIGGI), and 195-215 (GILLAILPPGAFIVLGFLLAA).

This sequence belongs to the NqrDE/RnfAE family. In terms of assembly, the complex is composed of six subunits: RnfA, RnfB, RnfC, RnfD, RnfE and RnfG.

It localises to the cell inner membrane. Functionally, part of a membrane-bound complex that couples electron transfer with translocation of ions across the membrane. The protein is Ion-translocating oxidoreductase complex subunit E of Azotobacter vinelandii (strain DJ / ATCC BAA-1303).